Here is a 236-residue protein sequence, read N- to C-terminus: Uridylate kinase (236 aa).

10–13 (KLSG) serves as a coordination point for ATP. UMP is bound at residue glycine 52. The ATP site is built by glycine 53 and arginine 57. Residues aspartate 72 and 133-140 (TGNPFFTT) each bind UMP. The ATP site is built by threonine 160, tyrosine 166, and aspartate 169.

Belongs to the UMP kinase family. Homohexamer.

The protein localises to the cytoplasm. The enzyme catalyses UMP + ATP = UDP + ADP. Its pathway is pyrimidine metabolism; CTP biosynthesis via de novo pathway; UDP from UMP (UMPK route): step 1/1. Its activity is regulated as follows. Inhibited by UTP. Its function is as follows. Catalyzes the reversible phosphorylation of UMP to UDP. This is Uridylate kinase from Bacteroides thetaiotaomicron (strain ATCC 29148 / DSM 2079 / JCM 5827 / CCUG 10774 / NCTC 10582 / VPI-5482 / E50).